We begin with the raw amino-acid sequence, 929 residues long: Chaperone protein ClpC1, chloroplastic (929 aa).

The transit peptide at 1–38 directs the protein to the chloroplast; it reads MAMATRVLAQSTPPSLACYQRNVPSRGSGRSRRSVKMM. The Clp R domain maps to 95 to 237; the sequence is FERFTEKAIK…RTQVIRMVGE (143 aa). Repeat stretches follow at residues 98–163 and 173–237; these read FTEK…IGRG and FTPR…MVGE. The interval 257–504 is i; sequence LEEYGTNLTK…RVRLRHAQVP (248 aa). ATP is bound at residue 302–309; that stretch reads GEPGVGKT. One can recognise a UVR domain in the interval 511–546; that stretch reads EKELRQITKEKNEAVRGQDFEKAGTLRDREIELRAE. The tract at residues 552–571 is disordered; that stretch reads AKGKEMSKAESETGEEGPMV. Over residues 553–562 the composition is skewed to basic and acidic residues; the sequence is KGKEMSKAES. Residues 571-762 form an II region; sequence VTESDIQHIV…LLIMTSNVGS (192 aa). An ATP-binding site is contributed by 645–652; the sequence is GPTGVGKS. Positions 908–919 are enriched in polar residues; it reads LNGGSGTPTTSL. Positions 908-929 are disordered; sequence LNGGSGTPTTSLEEQEDSLPVA. Residues 920–929 show a composition bias toward acidic residues; sequence EEQEDSLPVA.

This sequence belongs to the ClpA/ClpB family. ClpC subfamily. In terms of assembly, homodimer. May form hexamer and interact with Clp core. Interacts (via N-terminus) with CLPS1. Interacts with CLPF. Highly expressed in rosette leaves. Expressed in roots, stems and inflorescences. Expressed in photosynthetic green tissues with high levels in young, developing leaf tissues.

The protein resides in the plastid. The protein localises to the chloroplast stroma. It localises to the chloroplast membrane. In terms of biological role, molecular chaperone that hydrolyzes ATP and is associated with the chloroplast protein import apparatus. May function as the motor for chloroplast protein translocation, as translocation requires ATP hydrolysis in the stroma. May interact with a ClpP-like protease involved in degradation of denatured proteins in the chloroplast. Involved in the regulation of chlorophyll b biosynthesis through the destabilization of chlorophyllide a oxygenase (CAO) protein in response to the accumulation of chlorophyll b. Involved in leaf iron homeostasis. This is Chaperone protein ClpC1, chloroplastic from Arabidopsis thaliana (Mouse-ear cress).